The following is a 370-amino-acid chain: MTLPRSSRSVAVDGAQPYTITIAPGLLADDARLARHVRGRHALLLSDSQVAPHYAAGVRAALLSARPDLQIGELVIAAGEASKTLDTFGSAITALAELGATRDACVFALGGGVVGDLAGFAAACWMRGVDCVQLPTSLLAMVDSSVGGKTAVDIPQGKNLVGAFHPPRAVLADTDTLRTLPARELRAGLAEVIKYGAIRDPLFFQWLHAERHALLDSDPAALAQAIARSCEHKAEIVARDPLEKGERALLNLGHTFGHAIETEQGYGAPGNDNLNHGEAVAVGMVLAARLSATLGMSDAQDTEALRALLHDFELPTDIPPGLPPEALLARMRLDKKNIAGRLRLVLWRGIGKAEVVPDVEEAAVLKILAG.

NAD(+) is bound by residues 112 to 116 (GVVGD), 136 to 137 (TS), K149, K158, and 176 to 179 (TLRT). The Zn(2+) site is built by E191, H254, and H276.

This sequence belongs to the sugar phosphate cyclases superfamily. Dehydroquinate synthase family. The cofactor is Co(2+). Zn(2+) is required as a cofactor. Requires NAD(+) as cofactor.

Its subcellular location is the cytoplasm. It catalyses the reaction 7-phospho-2-dehydro-3-deoxy-D-arabino-heptonate = 3-dehydroquinate + phosphate. It functions in the pathway metabolic intermediate biosynthesis; chorismate biosynthesis; chorismate from D-erythrose 4-phosphate and phosphoenolpyruvate: step 2/7. Catalyzes the conversion of 3-deoxy-D-arabino-heptulosonate 7-phosphate (DAHP) to dehydroquinate (DHQ). The polypeptide is 3-dehydroquinate synthase (Xanthomonas oryzae pv. oryzae (strain PXO99A)).